Here is a 394-residue protein sequence, read N- to C-terminus: MSKEKFERTKPHVNVGTIGHVDHGKTTLTAAITTVLAKTYGGSARAFDQIDNAPEEKARGITINTSHVEYDTPTRHYAHVDCPGHADYVKNMITGAAQMDGAILVVAATDGPMPQTREHILLGRQVGVPYIIVFLNKCDMVDDEELLELVEMEVRELLSQYDFPGDDTPIVRGSALKALEGDAEWEAKIIELAGHLDTYIPEPERAIDKPFLLPIEDVFSISGRGTVVTGRVERGIIKVGEEVEIVGIKETAKTTCTGVEMFRKLLDEGRAGENVGVLLRGIKREEIERGQVLAKPGTINPHTKFESEVYILSKDEGGRHTPFFKGYRPQFYFRTTDVTGTIELPEGVEMVMPGDNIKMVVTLIHPIAMDDGLRFAIREGGRTVGAGVVAKVLG.

The tr-type G domain occupies Lys10–Glu204. The interval Gly19 to Thr26 is G1. Residue Gly19–Thr26 participates in GTP binding. Position 26 (Thr26) interacts with Mg(2+). A G2 region spans residues Gly60–Asn64. The G3 stretch occupies residues Asp81–Gly84. Residues Asp81–His85 and Asn136–Asp139 each bind GTP. Positions Asn136–Asp139 are G4. A G5 region spans residues Ser174–Leu176.

It belongs to the TRAFAC class translation factor GTPase superfamily. Classic translation factor GTPase family. EF-Tu/EF-1A subfamily. Monomer.

The protein resides in the cytoplasm. The catalysed reaction is GTP + H2O = GDP + phosphate + H(+). In terms of biological role, GTP hydrolase that promotes the GTP-dependent binding of aminoacyl-tRNA to the A-site of ribosomes during protein biosynthesis. The chain is Elongation factor Tu from Klebsiella pneumoniae subsp. pneumoniae (strain ATCC 700721 / MGH 78578).